Reading from the N-terminus, the 118-residue chain is DNA-binding protein inhibitor ID-3 (118 aa).

Positions 32–84 (SHKGPGVDEPMGLLYDMNGCYSKLKELVPGIPQGSKLSQVEILQHVIDYIFDL) constitute a bHLH domain.

In terms of assembly, homodimer. Heterodimer with other HLH proteins. Interacts (via HLH domain) with the bHLH protein hes4/hairy2 (via Orange domain). Interacts with stat3.

It is found in the nucleus. Functionally, transcriptional regulator (lacking a basic DNA binding domain) which negatively regulates the basic helix-loop-helix (bHLH) transcription factors by forming heterodimers and inhibiting their DNA binding and transcriptional activity. Influences cell fate decisions in the embryo by sequestering and blocking the activity of the bHLH transcription factors that control these decisions. Inhibits the binding of myogenic bHLH-containing complexes to E-box DNA, thereby preventing activation of muscle-specific target genes. Also inhibits the activity of neurogenic factor neurod1/neuroD. Plays a role in cell cycle progression and survival of neural crest progenitors; binding to either hes4-B/hairy2b or stat3 blocks the formation of transcription factor complexes and the repressor function of hes4-B/hairy2B, to allow neural crest progenitors to differentiate. May play a role in the regulation of the circadian rhythm. The protein is DNA-binding protein inhibitor ID-3 (id3) of Xenopus tropicalis (Western clawed frog).